A 141-amino-acid polypeptide reads, in one-letter code: uncharacterized protein (141 aa).

Residues 24 to 52 (KVQTALQKEAKTIKREQKKIKDEIDTFKT) are a coiled coil.

This is an uncharacterized protein from Invertebrate iridescent virus 6 (IIV-6).